The chain runs to 932 residues: Progesterone receptor (932 aa).

An AF3; mediates transcriptional activation region spans residues 1–164 (MTELKAKGPR…PATQGVLSPL (164 aa)). Residues 1–254 (MTELKAKGPR…GGAAAGGAAA (254 aa)) form a disordered region. The tract at residues 1–565 (MTELKAKGPR…YSFESLPQKI (565 aa)) is modulating, Pro-Rich. Position 20 is a phosphoserine (S20). Positions 55-59 (LDGLL) match the LXXL motif 1 motif. S81 carries the phosphoserine modification. A compositionally biased stretch (low complexity) spans 88–103 (SRAEATRGAGGSSSSP). Positions 115–119 (LDTLL) match the LXXL motif 2 motif. A phosphoserine mark is found at S130 and S162. The interval 165 to 304 (MSRSGGKAGD…LATTVMDFIH (140 aa)) is mediates transcriptional transrepression. Positions 183–187 (KVLPQ) match the Nuclear localization signal motif. Phosphoserine is present on residues S190 and S213. The span at 220–231 (EVEEEDGSESED) shows a compositional bias: acidic residues. Over residues 232 to 254 (SAGPLLKGKPRALGGAAAGGAAA) the composition is skewed to low complexity. S293 is subject to Phosphoserine; by MAPK1. The segment covering 334-349 (AASAFAPPRSSPSASS) has biased composition (low complexity). The interval 334 to 356 (AASAFAPPRSSPSASSTPVAVGD) is disordered. S344 carries the phosphoserine; by MAPK modification. K387 is covalently cross-linked (Glycyl lysine isopeptide (Lys-Gly) (interchain with G-Cter in SUMO); alternate). A Glycyl lysine isopeptide (Lys-Gly) (interchain with G-Cter in ubiquitin); alternate cross-link involves residue K387. Disordered regions lie at residues 414-451 (PDFPLGPPPPLPPRAPPSRPGEAAVTAAPASASVSSAS) and 468-499 (PPQQGPFAPPPSKAPGAGGCLPPRDGLPSTAA). The span at 417 to 432 (PLGPPPPLPPRAPPSR) shows a compositional bias: pro residues. Residues 433-451 (PGEAAVTAAPASASVSSAS) are compositionally biased toward low complexity. The interval 455-545 (STLECILYKA…VYPPYLNYLR (91 aa)) is AF1; mediates transcriptional activation. Residues 470-480 (QQGPFAPPPSK) are compositionally biased toward pro residues. K530 participates in a covalent cross-link: Glycyl lysine isopeptide (Lys-Gly) (interchain with G-Cter in SUMO). 2 NR C4-type zinc fingers span residues 566 to 586 (CLICGDEASGCHYGVLTCGSC) and 602 to 626 (CAGRNDCIVDKIRRKNCPACRLRKC). Positions 566 to 638 (CLICGDEASG…AGMVLGGRKF (73 aa)) form a DNA-binding region, nuclear receptor. Position 675 is a phosphoserine (S675). The NR LBD domain maps to 678 to 912 (QDIQLIPPLI…EFPEMMSEVI (235 aa)). The interval 686-932 (LINLLMSIEP…MVKPLLFHKK (247 aa)) is AF2; mediates transcriptional activation. R765 provides a ligand contact to progesterone.

It belongs to the nuclear hormone receptor family. In terms of assembly, interacts with SMARD1 and UNC45A. Interacts with CUEDC2; the interaction promotes ubiquitination, decreases sumoylation, and represses transcriptional activity. Interacts with PIAS3; the interaction promotes sumoylation of PR in a hormone-dependent manner, inhibits DNA-binding, and alters nuclear export. Interacts with SP1; the interaction requires ligand-induced phosphorylation on Ser-344 by ERK1/2-MAPK. Interacts with PRMT2. Interacts with NCOA2 and NCOA1. Interacts with KLF9. Interacts with GTF2B. Post-translationally, phosphorylated on multiple serine sites. Several of these sites are hormone-dependent. Phosphorylation on Ser-293 is highly hormone-dependent and modulates ubiquitination and sumoylation on Lys-387. Phosphorylation on Ser-102 and Ser-344 also requires induction by hormone. Basal phosphorylation on Ser-81, Ser-162 and Ser-190 is increased in response to progesterone and can be phosphorylated in vitro by the CDK2-A1 complex. Phosphorylation at Ser-162 and Ser-293, but not at Ser-190, is impaired during the G(2)/M phase of the cell cycle. Phosphorylation on Ser-344 by ERK1/2 MAPK is required for interaction with SP1. Sumoylation is hormone-dependent and represses transcriptional activity. Sumoylation on all three sites is enhanced by PIAS3. Desumoylated by SENP1. Sumoylation on Lys-387, the main site of sumoylation, is repressed by ubiquitination on the same site, and modulated by phosphorylation at Ser-293. In terms of processing, ubiquitination is hormone-dependent and represses sumoylation on the same site. Promoted by MAPK-mediated phosphorylation on Ser-293. Ubiquitinated by UBR5, leading to its degradation: UBR5 specifically recognizes and binds ligand-bound PGR when it is not associated with coactivators (NCOAs). In presence of NCOAs, the UBR5-degron is not accessible, preventing its ubiquitination and degradation. Post-translationally, palmitoylated by ZDHHC7 and ZDHHC21. Palmitoylation is required for plasma membrane targeting and for rapid intracellular signaling via ERK and AKT kinases and cAMP generation.

The protein localises to the nucleus. It is found in the cytoplasm. The steroid hormones and their receptors are involved in the regulation of eukaryotic gene expression and affect cellular proliferation and differentiation in target tissues. Transcriptional activator of several progesteron-dependent promoters in a variety of cell types. Involved in activation of SRC-dependent MAPK signaling on hormone stimulation. This chain is Progesterone receptor (PGR), found in Hylobates lar (Lar gibbon).